A 304-amino-acid polypeptide reads, in one-letter code: Ribosomal protein L11 methyltransferase (304 aa).

Positions 152, 173, 195, and 234 each coordinate S-adenosyl-L-methionine.

It belongs to the methyltransferase superfamily. PrmA family.

It localises to the cytoplasm. The catalysed reaction is L-lysyl-[protein] + 3 S-adenosyl-L-methionine = N(6),N(6),N(6)-trimethyl-L-lysyl-[protein] + 3 S-adenosyl-L-homocysteine + 3 H(+). In terms of biological role, methylates ribosomal protein L11. The sequence is that of Ribosomal protein L11 methyltransferase from Cupriavidus metallidurans (strain ATCC 43123 / DSM 2839 / NBRC 102507 / CH34) (Ralstonia metallidurans).